Consider the following 122-residue polypeptide: Large ribosomal subunit protein uL14 (122 aa).

The protein belongs to the universal ribosomal protein uL14 family. Part of the 50S ribosomal subunit. Forms a cluster with proteins L3 and L19. In the 70S ribosome, L14 and L19 interact and together make contacts with the 16S rRNA in bridges B5 and B8.

In terms of biological role, binds to 23S rRNA. Forms part of two intersubunit bridges in the 70S ribosome. This chain is Large ribosomal subunit protein uL14, found in Flavobacterium johnsoniae (strain ATCC 17061 / DSM 2064 / JCM 8514 / BCRC 14874 / CCUG 350202 / NBRC 14942 / NCIMB 11054 / UW101) (Cytophaga johnsonae).